The primary structure comprises 127 residues: Large ribosomal subunit protein bL17 (127 aa).

The protein belongs to the bacterial ribosomal protein bL17 family. Part of the 50S ribosomal subunit. Contacts protein L32.

This chain is Large ribosomal subunit protein bL17, found in Photobacterium profundum (strain SS9).